We begin with the raw amino-acid sequence, 231 residues long: Large ribosomal subunit protein uL1 (231 aa).

The protein belongs to the universal ribosomal protein uL1 family. As to quaternary structure, part of the 50S ribosomal subunit.

Its function is as follows. Binds directly to 23S rRNA. The L1 stalk is quite mobile in the ribosome, and is involved in E site tRNA release. Protein L1 is also a translational repressor protein, it controls the translation of the L11 operon by binding to its mRNA. In Verminephrobacter eiseniae (strain EF01-2), this protein is Large ribosomal subunit protein uL1.